Consider the following 1324-residue polypeptide: Sal-like protein 1 (1324 aa).

Residues 1-42 (MSRRKQAKPQHFQSDPEVASLPRRDGDTEKGQPSRPTKSKDA) form a disordered region. The span at 22-42 (PRRDGDTEKGQPSRPTKSKDA) shows a compositional bias: basic and acidic residues. The C2H2-type 1; atypical zinc finger occupies 43-65 (HVCGRCCAEFFELSDLLLHKKNC). Disordered stretches follow at residues 77-102 (NPAS…NDTV), 108-127 (VDCS…SMEV), 132-172 (ANKS…TSAI), and 317-336 (PPIQ…SNSG). Positions 113–124 (LSEHNGLDREES) are enriched in basic and acidic residues. The span at 135–158 (SGSGTSSGSHSSTAPSSSSSSSSS) shows a compositional bias: low complexity. The segment covering 321–336 (LPQSSSGNTIIPSNSG) has biased composition (polar residues). Residue Lys439 forms a Glycyl lysine isopeptide (Lys-Gly) (interchain with G-Cter in SUMO2) linkage. C2H2-type zinc fingers lie at residues 449-471 (HKCR…LRSH) and 477-499 (FKCN…FQRH). The tract at residues 577–646 (PIPISHSATS…ASSSVLSSPA (70 aa)) is disordered. 3 positions are modified to phosphoserine: Ser590, Ser593, and Ser595. Residues 633–646 (SVPTASSSVLSSPA) show a composition bias toward low complexity. Residues Lys673, Lys690, and Lys701 each participate in a glycyl lysine isopeptide (Lys-Gly) (interchain with G-Cter in SUMO2) cross-link. 3 consecutive C2H2-type zinc fingers follow at residues 706–728 (NECI…YRTH), 734–756 (FKCK…YSVH), and 766–788 (HSCP…IRMH). Disordered stretches follow at residues 790 to 856 (GGQI…SSPL) and 894 to 963 (EGDV…LSPT). A compositionally biased stretch (polar residues) spans 802-811 (YSESMESDTG). Residues 820–833 (DLDNFSDENMEDCP) show a composition bias toward acidic residues. Residues 843–856 (SADASQDSLSSSPL) show a composition bias toward low complexity. The span at 899-936 (TNDSSSVGGDMESQSAGSPAISESTSSMQALSPSNSTQ) shows a compositional bias: polar residues. Residues 937–949 (EFHKSPSIEEKPQ) show a composition bias toward basic and acidic residues. 2 positions are modified to phosphoserine: Ser941 and Ser943. Residues Lys947 and Lys982 each participate in a glycyl lysine isopeptide (Lys-Gly) (interchain with G-Cter in SUMO2) cross-link. C2H2-type zinc fingers lie at residues 1001–1023 (TACD…YRSH) and 1029–1051 (FICT…MLTH). Residue Lys1086 forms a Glycyl lysine isopeptide (Lys-Gly) (interchain with G-Cter in SUMO2) linkage. The disordered stretch occupies residues 1095–1120 (VSPQDSKDTPTSHVPSGPLSSSATSP). A compositionally biased stretch (polar residues) spans 1105 to 1119 (TSHVPSGPLSSSATS). 2 consecutive C2H2-type zinc fingers follow at residues 1134–1156 (HYCN…ERTH) and 1162–1184 (FACT…MGTH). Glycyl lysine isopeptide (Lys-Gly) (interchain with G-Cter in SUMO2) cross-links involve residues Lys1219, Lys1299, and Lys1319.

This sequence belongs to the sal C2H2-type zinc-finger protein family. In terms of assembly, may associate with NuRD histone deacetylase complex (HDAC). Interacts with components of HDAC complex including HDAC1, HDAC2, RBBP4, RBPP7, MTA1 and MTA2. Interacts with CCNQ. Interacts with NSD2 (via PHD-type zinc fingers 1, 2 and 3). As to expression, highest levels in kidney. Lower levels in adult brain (enriched in corpus callosum, lower expression in substantia nigra) and liver.

Its subcellular location is the nucleus. In terms of biological role, transcriptional repressor involved in organogenesis. Plays an essential role in ureteric bud invasion during kidney development. The polypeptide is Sal-like protein 1 (SALL1) (Homo sapiens (Human)).